The chain runs to 546 residues: 2-isopropylmalate synthase (546 aa).

In terms of domain architecture, Pyruvate carboxyltransferase spans 8–271; the sequence is ILIFDTTLRD…NSFFKRNPDS (264 aa). The Mn(2+) site is built by aspartate 17, histidine 208, histidine 210, and asparagine 244. Positions 408-546 are regulatory domain; that stretch reads QLSLVQVSCG…TNTFLSNNAN (139 aa).

The protein belongs to the alpha-IPM synthase/homocitrate synthase family. LeuA type 1 subfamily. Homodimer. Requires Mn(2+) as cofactor.

The protein localises to the cytoplasm. The catalysed reaction is 3-methyl-2-oxobutanoate + acetyl-CoA + H2O = (2S)-2-isopropylmalate + CoA + H(+). The protein operates within amino-acid biosynthesis; L-leucine biosynthesis; L-leucine from 3-methyl-2-oxobutanoate: step 1/4. In terms of biological role, catalyzes the condensation of the acetyl group of acetyl-CoA with 3-methyl-2-oxobutanoate (2-ketoisovalerate) to form 3-carboxy-3-hydroxy-4-methylpentanoate (2-isopropylmalate). In Prochlorococcus marinus (strain AS9601), this protein is 2-isopropylmalate synthase.